The chain runs to 294 residues: tRNA dimethylallyltransferase (294 aa).

Residue 10-17 participates in ATP binding; that stretch reads GPTAVGKT. Residue 12-17 participates in substrate binding; the sequence is TAVGKT. Positions 35 to 38 are interaction with substrate tRNA; that stretch reads DSQQ.

Belongs to the IPP transferase family. As to quaternary structure, monomer. Requires Mg(2+) as cofactor.

It carries out the reaction adenosine(37) in tRNA + dimethylallyl diphosphate = N(6)-dimethylallyladenosine(37) in tRNA + diphosphate. Catalyzes the transfer of a dimethylallyl group onto the adenine at position 37 in tRNAs that read codons beginning with uridine, leading to the formation of N6-(dimethylallyl)adenosine (i(6)A). The protein is tRNA dimethylallyltransferase of Streptococcus suis (strain 98HAH33).